We begin with the raw amino-acid sequence, 141 residues long: Auxin-responsive protein SAUR62 (141 aa).

Belongs to the ARG7 family. As to expression, expressed in stamen filaments and petals.

The protein localises to the cell membrane. May promote auxin-stimulated organ elongation, such as hypocotyls, stamen filaments and petals. This chain is Auxin-responsive protein SAUR62, found in Arabidopsis thaliana (Mouse-ear cress).